Consider the following 157-residue polypeptide: MRVVIQRVKASRVEVDGEVIGTIGRGLNLLVGISRTDTIAEVEWMVRKCLDLRLFPDEKGSLALSVQEMGAELLVVSQFTLYGDGRKGRRPSFDRAAGGEQAQTLYDRFVAGLRQSGLRVETGQFGAMMEVFILNDGPVTLLLEREAPLEQEDNRDD.

The Gly-cisPro motif, important for rejection of L-amino acids signature appears at 137 to 138 (GP).

This sequence belongs to the DTD family. In terms of assembly, homodimer.

It localises to the cytoplasm. It carries out the reaction glycyl-tRNA(Ala) + H2O = tRNA(Ala) + glycine + H(+). It catalyses the reaction a D-aminoacyl-tRNA + H2O = a tRNA + a D-alpha-amino acid + H(+). Its function is as follows. An aminoacyl-tRNA editing enzyme that deacylates mischarged D-aminoacyl-tRNAs. Also deacylates mischarged glycyl-tRNA(Ala), protecting cells against glycine mischarging by AlaRS. Acts via tRNA-based rather than protein-based catalysis; rejects L-amino acids rather than detecting D-amino acids in the active site. By recycling D-aminoacyl-tRNA to D-amino acids and free tRNA molecules, this enzyme counteracts the toxicity associated with the formation of D-aminoacyl-tRNA entities in vivo and helps enforce protein L-homochirality. The chain is D-aminoacyl-tRNA deacylase from Cyanothece sp. (strain PCC 7425 / ATCC 29141).